The following is a 275-amino-acid chain: ADP-dependent (S)-NAD(P)H-hydrate dehydratase (275 aa).

Residues 5–273 (TDEILAKVIK…EEIPLFMKKY (269 aa)) form the YjeF C-terminal domain. (6S)-NADPHX is bound by residues alanine 40, glycine 103, and histidine 151. Glycine 214 contributes to the AMP binding site. Aspartate 215 is a binding site for (6S)-NADPHX.

The protein belongs to the NnrD/CARKD family. Homotetramer. The cofactor is Mg(2+).

The enzyme catalyses (6S)-NADHX + ADP = AMP + phosphate + NADH + H(+). The catalysed reaction is (6S)-NADPHX + ADP = AMP + phosphate + NADPH + H(+). Its function is as follows. Catalyzes the dehydration of the S-form of NAD(P)HX at the expense of ADP, which is converted to AMP. Together with NAD(P)HX epimerase, which catalyzes the epimerization of the S- and R-forms, the enzyme allows the repair of both epimers of NAD(P)HX, a damaged form of NAD(P)H that is a result of enzymatic or heat-dependent hydration. The sequence is that of ADP-dependent (S)-NAD(P)H-hydrate dehydratase from Lactococcus lactis subsp. lactis (strain IL1403) (Streptococcus lactis).